We begin with the raw amino-acid sequence, 537 residues long: Chaperonin GroEL 2 (537 aa).

Residues 29–32 (TLGP), 86–90 (DGTTT), Gly413, 477–479 (NAA), and Asp493 contribute to the ATP site.

It belongs to the chaperonin (HSP60) family. In terms of assembly, forms a cylinder of 14 subunits composed of two heptameric rings stacked back-to-back. Interacts with the co-chaperonin GroES.

It is found in the cytoplasm. It carries out the reaction ATP + H2O + a folded polypeptide = ADP + phosphate + an unfolded polypeptide.. Its function is as follows. Together with its co-chaperonin GroES, plays an essential role in assisting protein folding. The GroEL-GroES system forms a nano-cage that allows encapsulation of the non-native substrate proteins and provides a physical environment optimized to promote and accelerate protein folding. In Thermobifida fusca (strain YX), this protein is Chaperonin GroEL 2.